Consider the following 146-residue polypeptide: Mitochondrial DnaJ homolog 2 (146 aa).

The region spanning 85–146 (EALLILDISA…LERSVLLRKR (62 aa)) is the J domain.

In terms of assembly, interacts with PAM16/TIM16 and is recruited by the PAM complex.

The protein localises to the mitochondrion inner membrane. In terms of biological role, plays a role in mitochondrial biogenesis and protein folding. Participates in the translocation of transit peptide-containing proteins from the inner membrane into the mitochondrial matrix in an ATP-dependent manner, probably by stimulating activity of mtHSP70 (SSC1). This Saccharomyces cerevisiae (strain ATCC 204508 / S288c) (Baker's yeast) protein is Mitochondrial DnaJ homolog 2 (MDJ2).